We begin with the raw amino-acid sequence, 152 residues long: uncharacterized protein (152 aa).

The protein belongs to the IIV-6 145L family.

This is an uncharacterized protein from Invertebrate iridescent virus 3 (IIV-3).